The following is a 437-amino-acid chain: O-acetyl-L-homoserine sulfhydrylase (437 aa).

The residue at position 216 (K216) is an N6-(pyridoxal phosphate)lysine.

This sequence belongs to the trans-sulfuration enzymes family. In terms of assembly, homohexamer. Pyridoxal 5'-phosphate is required as a cofactor.

The catalysed reaction is O-acetyl-L-homoserine + hydrogen sulfide = L-homocysteine + acetate. It catalyses the reaction O-acetyl-L-homoserine + methanethiol = L-methionine + acetate + H(+). It participates in amino-acid biosynthesis; L-methionine biosynthesis via de novo pathway; L-homocysteine from O-acetyl-L-homoserine: step 1/1. Its activity is regulated as follows. Inhibited by methionine and cystathionine. Functionally, catalyzes the conversion of O-acetyl-L-homoserine (OAH) into homocysteine in the methionine biosynthesis pathway. Can also use dimethyldisulfide and methanethiol as reduced sulfur sources, leading to the direct formation of methionine. Has weak cystathionine gamma-synthase activity. In Corynebacterium glutamicum (strain ATCC 13032 / DSM 20300 / JCM 1318 / BCRC 11384 / CCUG 27702 / LMG 3730 / NBRC 12168 / NCIMB 10025 / NRRL B-2784 / 534), this protein is O-acetyl-L-homoserine sulfhydrylase.